The sequence spans 447 residues: Argininosuccinate synthase (447 aa).

ATP is bound by residues 17 to 25 and Ala-43; that span reads AFSGGLDTS. Tyr-99 is a binding site for L-citrulline. ATP contacts are provided by Gly-129 and Thr-131. L-aspartate is bound by residues Thr-131, Asn-135, and Asp-136. An L-citrulline-binding site is contributed by Asn-135. ATP is bound at residue Asp-136. 2 residues coordinate L-citrulline: Arg-139 and Ser-192. Residue Asp-194 participates in ATP binding. Positions 201, 203, and 280 each coordinate L-citrulline.

Belongs to the argininosuccinate synthase family. Type 2 subfamily. In terms of assembly, homotetramer.

Its subcellular location is the cytoplasm. The catalysed reaction is L-citrulline + L-aspartate + ATP = 2-(N(omega)-L-arginino)succinate + AMP + diphosphate + H(+). Its pathway is amino-acid biosynthesis; L-arginine biosynthesis; L-arginine from L-ornithine and carbamoyl phosphate: step 2/3. This chain is Argininosuccinate synthase, found in Salmonella newport (strain SL254).